Here is a 298-residue protein sequence, read N- to C-terminus: uncharacterized protein (298 aa).

It belongs to the glycosyltransferase 2 family.

This is an uncharacterized protein from Mycoplasma genitalium (strain ATCC 33530 / DSM 19775 / NCTC 10195 / G37) (Mycoplasmoides genitalium).